We begin with the raw amino-acid sequence, 329 residues long: Sialic acid-binding periplasmic protein SiaP (329 aa).

The signal sequence occupies residues 1–23 (MMKLTKLFLATAISLGVSSAVLA). The N-acetyl-beta-neuraminate site is built by Asn-33, Asp-72, Glu-90, Arg-150, Arg-170, and Asn-210.

The protein belongs to the bacterial solute-binding protein 7 family. The complex comprises the extracytoplasmic solute receptor protein SiaP, and the fused transmembrane protein SiaT.

The protein resides in the periplasm. Its function is as follows. Part of the tripartite ATP-independent periplasmic (TRAP) transport system SiaPT involved in the uptake of sialic acid (N-acetyl-beta-neuraminate). This protein specifically binds sialic acid with high affinity. N-Acetylneuraminate (sialic acid) can then be incorporated into the lipooligosaccharides (LOS) as a terminal non-reducing sugar, protecting the bacterium from complement-mediated killing by normal human serum. The protein is Sialic acid-binding periplasmic protein SiaP (siaP) of Haemophilus influenzae (strain ATCC 51907 / DSM 11121 / KW20 / Rd).